Here is a 464-residue protein sequence, read N- to C-terminus: Glycosyl hydrolase family 109 protein 1 (464 aa).

The signal sequence occupies residues methionine 1–alanine 16. Residue cysteine 17 is the site of N-palmitoyl cysteine attachment. The S-diacylglycerol cysteine moiety is linked to residue cysteine 17. NAD(+) is bound by residues methionine 63–arginine 64, aspartate 85, tryptophan 134–histidine 137, glutamate 154–valine 155, and asparagine 183. Substrate is bound by residues tyrosine 212, arginine 228, tyrosine 240–histidine 243, and tyrosine 318. Tyrosine 240 serves as a coordination point for NAD(+).

This sequence belongs to the Gfo/Idh/MocA family. Glycosyl hydrolase 109 subfamily. NAD(+) serves as cofactor.

It is found in the cell membrane. Glycosidase. Has no alpha-N-acetylgalactosaminidase activity. In Bacteroides fragilis (strain ATCC 25285 / DSM 2151 / CCUG 4856 / JCM 11019 / LMG 10263 / NCTC 9343 / Onslow / VPI 2553 / EN-2), this protein is Glycosyl hydrolase family 109 protein 1.